The chain runs to 230 residues: ATP synthase subunit a (230 aa).

Transmembrane regions (helical) follow at residues Leu-17–Ala-37, Ile-78–Ile-98, Asp-107–Ile-127, Leu-165–Val-187, and Glu-198–Ile-218.

The protein belongs to the ATPase A chain family. F-type ATPases have 2 components, CF(1) - the catalytic core - and CF(0) - the membrane proton channel. CF(1) has five subunits: alpha(3), beta(3), gamma(1), delta(1), epsilon(1). CF(0) has three main subunits: a(1), b(2) and c(9-12). The alpha and beta chains form an alternating ring which encloses part of the gamma chain. CF(1) is attached to CF(0) by a central stalk formed by the gamma and epsilon chains, while a peripheral stalk is formed by the delta and b chains.

It localises to the cell inner membrane. Key component of the proton channel; it plays a direct role in the translocation of protons across the membrane. This Legionella pneumophila subsp. pneumophila (strain Philadelphia 1 / ATCC 33152 / DSM 7513) protein is ATP synthase subunit a.